The sequence spans 98 residues: NADH-ubiquinone oxidoreductase chain 4L (98 aa).

3 consecutive transmembrane segments (helical) span residues 1–21 (MSLV…GLLM), 29–49 (SLLC…IMIL), and 61–81 (IILL…LVMV).

Belongs to the complex I subunit 4L family. Core subunit of respiratory chain NADH dehydrogenase (Complex I) which is composed of 45 different subunits.

The protein localises to the mitochondrion inner membrane. The enzyme catalyses a ubiquinone + NADH + 5 H(+)(in) = a ubiquinol + NAD(+) + 4 H(+)(out). In terms of biological role, core subunit of the mitochondrial membrane respiratory chain NADH dehydrogenase (Complex I) which catalyzes electron transfer from NADH through the respiratory chain, using ubiquinone as an electron acceptor. Part of the enzyme membrane arm which is embedded in the lipid bilayer and involved in proton translocation. This chain is NADH-ubiquinone oxidoreductase chain 4L (MT-ND4L), found in Urotrichus talpoides (Japanese shrew mole).